The primary structure comprises 1323 residues: Inositol hexakisphosphate and diphosphoinositol-pentakisphosphate kinase (1323 aa).

26–27 (RK) is a substrate binding site. ATP is bound by residues arginine 109, lysine 162, histidine 169, arginine 188, 212 to 215 (EEFI), and 221 to 223 (DVK). 188–189 (RK) lines the substrate pocket. Residues lysine 223 and arginine 237 each contribute to the substrate site. ATP contacts are provided by residues aspartate 284 and 296–298 (DVN). 301 to 304 (SFVK) lines the substrate pocket. The interval 355-426 (TTPSGKLAEL…VLELARALVI (72 aa)) is polyphosphoinositide-binding domain. 2 stretches are compositionally biased toward polar residues: residues 933 to 947 (FNLSTNPKPATSSRS) and 977 to 992 (VTPTQLSTPSVTNDDL). Disordered stretches follow at residues 933–1022 (FNLS…SEDD), 1043–1107 (AMAD…GGGK), and 1134–1155 (IVIPTPVPSTTTAVVEDEASER). Over residues 993 to 1006 (SISSNAESTAAEST) the composition is skewed to low complexity. The segment covering 1062–1074 (KSMEEGDKPHGEW) has biased composition (basic and acidic residues). The span at 1090–1101 (SNEMESNNESME) shows a compositional bias: low complexity.

This sequence belongs to the histidine acid phosphatase family. VIP1 subfamily.

It localises to the cytoplasm. It is found in the cytosol. It carries out the reaction 1D-myo-inositol hexakisphosphate + ATP = 1-diphospho-1D-myo-inositol 2,3,4,5,6-pentakisphosphate + ADP. It catalyses the reaction 5-diphospho-1D-myo-inositol 1,2,3,4,6-pentakisphosphate + ATP + H(+) = 1,5-bis(diphospho)-1D-myo-inositol 2,3,4,6-tetrakisphosphate + ADP. Functionally, bifunctional inositol kinase that acts in concert with the IP6K kinases to synthesize the diphosphate group-containing inositol pyrophosphates diphosphoinositol pentakisphosphate, PP-InsP5, and bis-diphosphoinositol tetrakisphosphate, (PP)2-InsP4. PP-InsP5 and (PP)2-InsP4, also respectively called InsP7 and InsP8, may regulate a variety of cellular processes, including apoptosis, vesicle trafficking, cytoskeletal dynamics, and exocytosis. Phosphorylates inositol hexakisphosphate (InsP6) at position 1 to produce PP-InsP5 which is in turn phosphorylated by IP6Ks to produce (PP)2-InsP4. Alternatively, phosphorylates PP-InsP5 at position 1, produced by IP6Ks from InsP6, to produce (PP)2-InsP4. In Caenorhabditis elegans, this protein is Inositol hexakisphosphate and diphosphoinositol-pentakisphosphate kinase.